The following is a 211-amino-acid chain: UPF0056 membrane protein BUsg_257 (211 aa).

6 helical membrane passes run 14–34 (FFVSLCALVNPIGMIPIFTTM), 54–74 (AFIILLISLFAGNSILNAFGI), 76–96 (INSFRIAGGILIISIAFSMIS), 116–136 (VVPLAMPLIAGPGAISSTIVW), 144–164 (SDFLGCSIAIFLFAFVCWLCF), and 185–205 (IMGLLLMSLGIEFLSIGIKSI).

Belongs to the UPF0056 (MarC) family.

The protein resides in the cell membrane. The polypeptide is UPF0056 membrane protein BUsg_257 (Buchnera aphidicola subsp. Schizaphis graminum (strain Sg)).